We begin with the raw amino-acid sequence, 243 residues long: uncharacterized protein (243 aa).

Belongs to the methyltransferase superfamily.

This is an uncharacterized protein from Mycobacterium tuberculosis (strain CDC 1551 / Oshkosh).